A 424-amino-acid polypeptide reads, in one-letter code: Enolase (424 aa).

(2R)-2-phosphoglycerate is bound at residue Gln-162. The active-site Proton donor is the Glu-204. Residues Asp-241, Glu-284, and Asp-311 each contribute to the Mg(2+) site. (2R)-2-phosphoglycerate is bound by residues Lys-336, Arg-365, Ser-366, and Lys-387. The Proton acceptor role is filled by Lys-336.

It belongs to the enolase family. Mg(2+) is required as a cofactor.

It is found in the cytoplasm. Its subcellular location is the secreted. The protein resides in the cell surface. The enzyme catalyses (2R)-2-phosphoglycerate = phosphoenolpyruvate + H2O. It functions in the pathway carbohydrate degradation; glycolysis; pyruvate from D-glyceraldehyde 3-phosphate: step 4/5. In terms of biological role, catalyzes the reversible conversion of 2-phosphoglycerate (2-PG) into phosphoenolpyruvate (PEP). It is essential for the degradation of carbohydrates via glycolysis. This chain is Enolase, found in Chelativorans sp. (strain BNC1).